The chain runs to 566 residues: Proline--tRNA ligase (566 aa).

It belongs to the class-II aminoacyl-tRNA synthetase family. ProS type 1 subfamily. Homodimer.

It localises to the cytoplasm. It catalyses the reaction tRNA(Pro) + L-proline + ATP = L-prolyl-tRNA(Pro) + AMP + diphosphate. Its function is as follows. Catalyzes the attachment of proline to tRNA(Pro) in a two-step reaction: proline is first activated by ATP to form Pro-AMP and then transferred to the acceptor end of tRNA(Pro). As ProRS can inadvertently accommodate and process non-cognate amino acids such as alanine and cysteine, to avoid such errors it has two additional distinct editing activities against alanine. One activity is designated as 'pretransfer' editing and involves the tRNA(Pro)-independent hydrolysis of activated Ala-AMP. The other activity is designated 'posttransfer' editing and involves deacylation of mischarged Ala-tRNA(Pro). The misacylated Cys-tRNA(Pro) is not edited by ProRS. In Staphylococcus haemolyticus (strain JCSC1435), this protein is Proline--tRNA ligase.